The following is a 325-amino-acid chain: Putative gluconeogenesis factor (325 aa).

The protein belongs to the gluconeogenesis factor family.

Its subcellular location is the cytoplasm. In terms of biological role, required for morphogenesis under gluconeogenic growth conditions. This chain is Putative gluconeogenesis factor, found in Streptococcus pneumoniae serotype 4 (strain ATCC BAA-334 / TIGR4).